We begin with the raw amino-acid sequence, 344 residues long: Nuclear distribution protein nudE homolog 1 (344 aa).

The segment at 1–93 (MEDSGKTFGS…MQHSEGYRQI (93 aa)) is self-association. Residues 18–188 (WRDLAMTYKQ…ELAVQQKQDK (171 aa)) are a coiled coil. Residues 30–47 (ENTQEELREFQEGSREYE) show a composition bias toward basic and acidic residues. The segment at 30 to 65 (ENTQEELREFQEGSREYEAELETQLQQAETRNRDLL) is disordered. The segment at 88-156 (EGYRQISALE…ERNAFLESEL (69 aa)) is interaction with PAFAH1B1. The tract at residues 167-290 (QRLKDEARDL…QSPSRKSGPA (124 aa)) is interaction with CENPF. A disordered region spans residues 181-243 (AVQQKQDKPR…CGLGSPSSGT (63 aa)). Polar residues predominate over residues 208–230 (ATGSAPSTPITHQGSSSGLNTPE). Serine 211 bears the Phosphoserine mark. Phosphothreonine occurs at positions 215, 228, 243, and 246. The S-palmitoyl cysteine; by ZDHHC2, ZDHHC3 and ZDHHC7 moiety is linked to residue cysteine 274. A disordered region spans residues 279–337 (YDQSPSRKSGPALGRGTKNRDGIDRRPGSTAVGDKGSGKRLEFAKPSSQLSSPALPSTQ). Serine 282 bears the Phosphoserine mark. A compositionally biased stretch (basic and acidic residues) spans 296–305 (KNRDGIDRRP). Low complexity predominate over residues 324–335 (PSSQLSSPALPS).

This sequence belongs to the nudE family. As to quaternary structure, homodimer. Interacts with CNTRL, LIS1, dynein, SLMAP and TCP1. Interacts with CENPF, dynactin, tubulin gamma, PAFAH1B1, PCM1 and PCNT. Interacts with ZNF365. Interacts with GTP-bound RAB9A and RAB9B; the interaction leads to RAB9-dynein motor tethering. Interacts (via C-terminus) with MCRS1 (via C-terminus); phosphorylation of NDE1 inhibits the interaction. Phosphorylated in mitosis. Phosphorylation at Thr-246 is essential for the G2/M transition. As to expression, expressed in brain, heart, kidney, liver, lung, skeletal muscle, spleen and testis.

The protein resides in the cytoplasm. It localises to the cytoskeleton. The protein localises to the microtubule organizing center. It is found in the centrosome. Its subcellular location is the spindle. The protein resides in the chromosome. It localises to the centromere. The protein localises to the kinetochore. It is found in the cleavage furrow. Its subcellular location is the cytoplasmic vesicle membrane. Its function is as follows. Required for centrosome duplication and formation and function of the mitotic spindle. Essential for the development of the cerebral cortex. May regulate the production of neurons by controlling the orientation of the mitotic spindle during division of cortical neuronal progenitors of the proliferative ventricular zone of the brain. Orientation of the division plane perpendicular to the layers of the cortex gives rise to two proliferative neuronal progenitors whereas parallel orientation of the division plane yields one proliferative neuronal progenitor and a postmitotic neuron. A premature shift towards a neuronal fate within the progenitor population may result in an overall reduction in the final number of neurons and an increase in the number of neurons in the deeper layers of the cortex. Acts as a RAB9A/B effector that tethers RAB9-associated late endosomes to the dynein motor for their retrograde transport to the trans-Golgi network. The chain is Nuclear distribution protein nudE homolog 1 from Rattus norvegicus (Rat).